Reading from the N-terminus, the 1392-residue chain is Ankyrin repeat domain-containing protein 30B (1392 aa).

The disordered stretch occupies residues 1–21; sequence MKRLLAAAGKGVRGPEPPNPF. ANK repeat units follow at residues 72 to 101, 105 to 134, 138 to 167, 171 to 200, and 204 to 233; these read KKRT…QLNV, EGRT…DLNY, YGNT…VIEV, ASLT…NANA, and SKCT…DVFA. Disordered regions lie at residues 265-292, 558-587, 636-656, 671-690, 830-877, and 904-926; these read PKNP…ERTP, AQMF…VSQK, DRET…PTCG, RETL…PTCG, KEGA…SDSE, and GKIE…QNSV. Composition is skewed to polar residues over residues 267–280 and 576–586; these read NPQN…STGT and DSESPCETVSQ. The span at 636-650 shows a compositional bias: basic and acidic residues; the sequence is DRETFKAESPDKDGL. Residues 830-840 show a composition bias toward polar residues; it reads KEGATKTVTGQ. Composition is skewed to basic and acidic residues over residues 864–874 and 904–915; these read LGRKEDTKSTS and GKIEESPEKPSH. 2 coiled-coil regions span residues 960-1168 and 1270-1318; these read RELK…KQDK and ETQC…QQLV.

In terms of tissue distribution, expressed in brain, breast and testis.

This chain is Ankyrin repeat domain-containing protein 30B (ANKRD30B), found in Homo sapiens (Human).